We begin with the raw amino-acid sequence, 94 residues long: MAGPKRFNNKDKRPKRPAQNLLFKRKRFCRFTVTGVEEIDYKDIDTLRDFIAENGKIIPARLTGTRAIFQRQLNTAIKRARFLAMLPYSDQHKI.

The protein belongs to the bacterial ribosomal protein bS18 family. As to quaternary structure, part of the 30S ribosomal subunit. Forms a tight heterodimer with protein bS6.

In terms of biological role, binds as a heterodimer with protein bS6 to the central domain of the 16S rRNA, where it helps stabilize the platform of the 30S subunit. This chain is Small ribosomal subunit protein bS18, found in Albidiferax ferrireducens (strain ATCC BAA-621 / DSM 15236 / T118) (Rhodoferax ferrireducens).